A 316-amino-acid polypeptide reads, in one-letter code: Protein YIPF2 (316 aa).

At alanine 2 the chain carries N-acetylalanine. Residues 2 to 124 are Cytoplasmic-facing; it reads ASADELTFHE…LRNRPDLYGP (123 aa). The disordered stretch occupies residues 16 to 37; sequence TNLLADTPDAATTSRSDQLTPQ. Residues 25–36 show a composition bias toward polar residues; the sequence is AATTSRSDQLTP. The helical transmembrane segment at 125 to 145 threads the bilayer; the sequence is FWICATLAFVLAVTGNLTLVL. Over 146–163 the chain is Lumenal; the sequence is AQRRDPSIHYSPQFHKVT. The chain crosses the membrane as a helical span at residues 164–184; that stretch reads VAGISIYCYAWLVPLALWGFL. Topologically, residues 185-196 are cytoplasmic; it reads RWRKGVQERMGP. A helical transmembrane segment spans residues 197-219; that stretch reads YTFLETVCIYGYSLFVFIPMVVL. Over 220-231 the chain is Lumenal; the sequence is WLIPVPWLQWLF. Residues 232–252 traverse the membrane as a helical segment; the sequence is GALALGLSAAGLVFTLWPVVR. At 253 to 256 the chain is on the cytoplasmic side; that stretch reads EDTR. The helical transmembrane segment at 257 to 277 threads the bilayer; sequence LVATVLLSVVVLLHALLAMGC. Over 278–316 the chain is Lumenal; it reads KLYFFQSLPPENVAPPPQITSLPSNIALSPTLPQSLAPS.

This sequence belongs to the YIP1 family. Interacts with YIPF6; this interaction may stabilize YIPF2. May also form a ternary complex with YIPF1 and YIPF6.

The protein resides in the golgi apparatus. Its subcellular location is the cis-Golgi network membrane. It localises to the trans-Golgi network membrane. The protein localises to the late endosome membrane. The chain is Protein YIPF2 (YIPF2) from Homo sapiens (Human).